A 397-amino-acid polypeptide reads, in one-letter code: Tryptophan synthase beta chain (397 aa).

Lys87 bears the N6-(pyridoxal phosphate)lysine mark.

It belongs to the TrpB family. As to quaternary structure, tetramer of two alpha and two beta chains. The cofactor is pyridoxal 5'-phosphate.

The enzyme catalyses (1S,2R)-1-C-(indol-3-yl)glycerol 3-phosphate + L-serine = D-glyceraldehyde 3-phosphate + L-tryptophan + H2O. The protein operates within amino-acid biosynthesis; L-tryptophan biosynthesis; L-tryptophan from chorismate: step 5/5. Functionally, the beta subunit is responsible for the synthesis of L-tryptophan from indole and L-serine. The protein is Tryptophan synthase beta chain of Salmonella arizonae (strain ATCC BAA-731 / CDC346-86 / RSK2980).